A 740-amino-acid polypeptide reads, in one-letter code: D-ornithine 4,5-aminomutase subunit beta (740 aa).

Residues Glu-81, Tyr-160, His-182, and 294–296 (RAQ) contribute to the substrate site. The region spanning 602-739 (PLKIVAATVG…VKKRREMREG (138 aa)) is the B12-binding domain. Residues 614–616 (EHS) and His-615 each bind adenosylcob(III)alamin. Residue Lys-626 is modified to N6-(pyridoxal phosphate)lysine. Residues 664–669 (STIISH), Thr-700, and Ser-720 each bind adenosylcob(III)alamin.

Heterotetramer of 2 alpha (OraS) and 2 beta (OraE) subunits. The cofactor is adenosylcob(III)alamin. It depends on pyridoxal 5'-phosphate as a cofactor.

It catalyses the reaction D-ornithine = (2R,4S)-2,4-diaminopentanoate. With respect to regulation, increased activity in the presence of dithiothreitol (DTT) in vitro. Inhibited by 1 mM potassium phosphate and potassium chloride. Inhibited by L-alpha-ornithine, D,L-alpha-lysine, L-beta-lysine (50%-60%), L-alpha-lysine (26%) and by delta-amino-n-valeric acid to a lesser extent. Significant decrease in activity is observed in the presence of 0.2 mM p-chloromercuribenzoate, N-ethylmaleimide and also by 2 mM iodoacetate to a lesser extent but not inhibited by arsenite. Functionally, component of a complex that catalyzes the reversible migration of the omega amino group of D-ornithine to C-4 to form (2R,4S)-2,4-diaminopentanoic acid. OraE may be the catalytic subunit. Active only on D-ornithine and 2,4-diaminopentanoic acid but not active on L-ornithine, L-beta-lysine, L-alpha-lysine or D-alpha-lysine. The protein is D-ornithine 4,5-aminomutase subunit beta (oraE) of Acetoanaerobium sticklandii (strain ATCC 12662 / DSM 519 / JCM 1433 / CCUG 9281 / NCIMB 10654 / HF) (Clostridium sticklandii).